The primary structure comprises 146 residues: Lipoprotein signal peptidase (146 aa).

A run of 3 helical transmembrane segments spans residues 6 to 26, 50 to 70, and 82 to 104; these read IFLL…TLFL, MFAF…GGIL, and YAFP…FVHA. Active-site residues include aspartate 108 and aspartate 125. Residues 123–143 form a helical membrane-spanning segment; the sequence is FADVAIDLAVAWILIMVYFFP.

The protein belongs to the peptidase A8 family.

The protein localises to the cell inner membrane. The catalysed reaction is Release of signal peptides from bacterial membrane prolipoproteins. Hydrolyzes -Xaa-Yaa-Zaa-|-(S,diacylglyceryl)Cys-, in which Xaa is hydrophobic (preferably Leu), and Yaa (Ala or Ser) and Zaa (Gly or Ala) have small, neutral side chains.. The protein operates within protein modification; lipoprotein biosynthesis (signal peptide cleavage). Functionally, this protein specifically catalyzes the removal of signal peptides from prolipoproteins. This is Lipoprotein signal peptidase from Sulfurovum sp. (strain NBC37-1).